Here is a 358-residue protein sequence, read N- to C-terminus: NADH-quinone oxidoreductase subunit H (358 aa).

The next 8 helical transmembrane spans lie at 30 to 50 (IAVGVCIVALYAILAIVLIYM), 96 to 116 (FLYNLAPFMVIIASFLTFACI), 129 to 149 (VGVFFLLAASSIGVVGILLAG), 168 to 188 (IISYELSVGMSIMTMVVLMGT), 201 to 221 (GWFIFKGHIPAVIAFIIYLIA), 265 to 285 (FIVASVAATIFLGGWMPLHII), 297 to 317 (IPGFIWFFAKAFFVVFLLMWI), and 336 to 356 (YLVPISMVNLLLMACCVAFGF).

The protein belongs to the complex I subunit 1 family. In terms of assembly, NDH-1 is composed of 14 different subunits. Subunits NuoA, H, J, K, L, M, N constitute the membrane sector of the complex.

The protein localises to the cell inner membrane. The enzyme catalyses a quinone + NADH + 5 H(+)(in) = a quinol + NAD(+) + 4 H(+)(out). Functionally, NDH-1 shuttles electrons from NADH, via FMN and iron-sulfur (Fe-S) centers, to quinones in the respiratory chain. The immediate electron acceptor for the enzyme in this species is believed to be ubiquinone. Couples the redox reaction to proton translocation (for every two electrons transferred, four hydrogen ions are translocated across the cytoplasmic membrane), and thus conserves the redox energy in a proton gradient. This subunit may bind ubiquinone. The protein is NADH-quinone oxidoreductase subunit H of Bacteroides thetaiotaomicron (strain ATCC 29148 / DSM 2079 / JCM 5827 / CCUG 10774 / NCTC 10582 / VPI-5482 / E50).